The primary structure comprises 130 residues: Small ribosomal subunit protein uS11 (130 aa).

It belongs to the universal ribosomal protein uS11 family. As to quaternary structure, part of the 30S ribosomal subunit. Interacts with proteins S7 and S18. Binds to IF-3.

Functionally, located on the platform of the 30S subunit, it bridges several disparate RNA helices of the 16S rRNA. Forms part of the Shine-Dalgarno cleft in the 70S ribosome. This is Small ribosomal subunit protein uS11 from Tropheryma whipplei (strain TW08/27) (Whipple's bacillus).